A 386-amino-acid polypeptide reads, in one-letter code: Cell division protein FtsZ (386 aa).

GTP contacts are provided by residues 18–22, 105–107, Glu-136, Arg-140, and Asp-184; these read GGGVN and GTG.

The protein belongs to the FtsZ family. In terms of assembly, homodimer. Polymerizes to form a dynamic ring structure in a strictly GTP-dependent manner. Interacts directly with several other division proteins.

The protein resides in the cytoplasm. Its function is as follows. Essential cell division protein that forms a contractile ring structure (Z ring) at the future cell division site. The regulation of the ring assembly controls the timing and the location of cell division. One of the functions of the FtsZ ring is to recruit other cell division proteins to the septum to produce a new cell wall between the dividing cells. Binds GTP and shows GTPase activity. The polypeptide is Cell division protein FtsZ (Mycobacterium kansasii).